The primary structure comprises 396 residues: Tryptophan synthase beta chain (396 aa).

Position 86 is an N6-(pyridoxal phosphate)lysine (lysine 86).

Belongs to the TrpB family. As to quaternary structure, tetramer of two alpha and two beta chains. Pyridoxal 5'-phosphate is required as a cofactor.

It catalyses the reaction (1S,2R)-1-C-(indol-3-yl)glycerol 3-phosphate + L-serine = D-glyceraldehyde 3-phosphate + L-tryptophan + H2O. It functions in the pathway amino-acid biosynthesis; L-tryptophan biosynthesis; L-tryptophan from chorismate: step 5/5. Its function is as follows. The beta subunit is responsible for the synthesis of L-tryptophan from indole and L-serine. This chain is Tryptophan synthase beta chain, found in Vibrio atlanticus (strain LGP32) (Vibrio splendidus (strain Mel32)).